Reading from the N-terminus, the 261-residue chain is Carnitinyl-CoA dehydratase (261 aa).

Glutamate 111 functions as the Nucleophile in the catalytic mechanism. The Proton acceptor role is filled by glutamate 131.

It belongs to the enoyl-CoA hydratase/isomerase family.

It catalyses the reaction (R)-carnitinyl-CoA = crotonobetainyl-CoA + H2O. Its pathway is amine and polyamine metabolism; carnitine metabolism. Catalyzes the reversible dehydration of L-carnitinyl-CoA to crotonobetainyl-CoA. The chain is Carnitinyl-CoA dehydratase from Citrobacter koseri (strain ATCC BAA-895 / CDC 4225-83 / SGSC4696).